A 58-amino-acid chain; its full sequence is Mu-diguetoxin-Dc1b (58 aa).

4 cysteine pairs are disulfide-bonded: C12/C26, C20/C40, C25/C54, and C42/C52.

This sequence belongs to the neurotoxin 26 (DTX) family. In terms of tissue distribution, expressed by the venom gland.

The protein resides in the secreted. In terms of biological role, acts by delaying the inactivation of presynaptic voltage-sensitive sodium channels (Nav). Acts against insects and cause a progressive spastic paralysis. The chain is Mu-diguetoxin-Dc1b from Diguetia canities (Desert bush spider).